A 503-amino-acid chain; its full sequence is Trehalose-6-phosphate synthase (503 aa).

Residue R22 participates in D-glucose 6-phosphate binding. UDP-alpha-D-glucose is bound at residue 42-43 (GG). The D-glucose 6-phosphate site is built by Y94 and D148. Residues R290 and K295 each coordinate UDP-alpha-D-glucose. A D-glucose 6-phosphate-binding site is contributed by R328. 393–397 (LVAKE) serves as a coordination point for UDP-alpha-D-glucose. A disordered region spans residues 481-503 (GETGDSGVTGESTPAPESDSGSF).

The protein belongs to the glycosyltransferase 20 family. As to quaternary structure, homotetramer.

The enzyme catalyses ADP-alpha-D-glucose + D-glucose 6-phosphate = alpha,alpha-trehalose 6-phosphate + ADP + H(+). The catalysed reaction is CDP-alpha-D-glucose + D-glucose 6-phosphate = alpha,alpha-trehalose 6-phosphate + CDP + H(+). It carries out the reaction GDP-alpha-D-glucose + D-glucose 6-phosphate = alpha,alpha-trehalose 6-phosphate + GDP + H(+). It catalyses the reaction TDP-alpha-D-glucose + D-glucose 6-phosphate = 5-methyl-UDP + alpha,alpha-trehalose 6-phosphate + H(+). The enzyme catalyses D-glucose 6-phosphate + UDP-alpha-D-glucose = alpha,alpha-trehalose 6-phosphate + UDP + H(+). It participates in glycan biosynthesis; trehalose biosynthesis. Its activity is regulated as follows. Stimulated by the polynucleotide FII (physiological activator), and by chondroitin sulfate (CS) and heparin. Activation by the polyanion is inhibited by high salt concentration as well as by high concentrations of mononucleoside phosphates. Involved in the production of glycogen and alpha-glucan via the TreS-Pep2 branch involved in the biosynthesis of maltose-1-phosphate (M1P), and probably in the osmoprotection via the biosynthesis of trehalose. Catalyzes the transfer of glucose from UDP-glucose (UDP-Glc) to glucose-6-phosphate (Glc-6-P) to form trehalose-6-phosphate. ADP-Glc, CDP-Glc, GDP-Glc and TDP-Glc are also glucosyl donors, however, when the pyrimidine sugar nucleotides (CDP-Glc, TDP-Glc and UDP-Glc) are used as substrates, there is an absolute requirement for a high molecular weight polyanion for activity. The sequence is that of Trehalose-6-phosphate synthase from Mycolicibacterium smegmatis (strain ATCC 700084 / mc(2)155) (Mycobacterium smegmatis).